Reading from the N-terminus, the 350-residue chain is UDP-3-O-acylglucosamine N-acyltransferase (350 aa).

His-257 (proton acceptor) is an active-site residue.

The protein belongs to the transferase hexapeptide repeat family. LpxD subfamily. As to quaternary structure, homotrimer.

It carries out the reaction a UDP-3-O-[(3R)-3-hydroxyacyl]-alpha-D-glucosamine + a (3R)-hydroxyacyl-[ACP] = a UDP-2-N,3-O-bis[(3R)-3-hydroxyacyl]-alpha-D-glucosamine + holo-[ACP] + H(+). It participates in bacterial outer membrane biogenesis; LPS lipid A biosynthesis. Catalyzes the N-acylation of UDP-3-O-acylglucosamine using 3-hydroxyacyl-ACP as the acyl donor. Is involved in the biosynthesis of lipid A, a phosphorylated glycolipid that anchors the lipopolysaccharide to the outer membrane of the cell. The chain is UDP-3-O-acylglucosamine N-acyltransferase from Chelativorans sp. (strain BNC1).